The sequence spans 210 residues: Large ribosomal subunit protein uL4 (210 aa).

Residues 46–89 (QGTASTLTRSEVRGGGRKPYKQKGTGRARQGSIRTPLRPGGGII) are disordered. The span at 60–71 (GGRKPYKQKGTG) shows a compositional bias: basic residues.

The protein belongs to the universal ribosomal protein uL4 family. As to quaternary structure, part of the 50S ribosomal subunit.

In terms of biological role, one of the primary rRNA binding proteins, this protein initially binds near the 5'-end of the 23S rRNA. It is important during the early stages of 50S assembly. It makes multiple contacts with different domains of the 23S rRNA in the assembled 50S subunit and ribosome. Forms part of the polypeptide exit tunnel. The sequence is that of Large ribosomal subunit protein uL4 from Prochlorococcus marinus (strain MIT 9215).